The sequence spans 149 residues: Transcriptional repressor NrdR (149 aa).

The segment at Cys-3 to Cys-34 is a zinc-finger region. The region spanning Pro-49–Glu-139 is the ATP-cone domain.

Belongs to the NrdR family. The cofactor is Zn(2+).

Negatively regulates transcription of bacterial ribonucleotide reductase nrd genes and operons by binding to NrdR-boxes. This Tolumonas auensis (strain DSM 9187 / NBRC 110442 / TA 4) protein is Transcriptional repressor NrdR.